The chain runs to 188 residues: Acireductone dioxygenase (188 aa).

Fe(2+)-binding residues include His97, His99, Glu103, and His141. Ni(2+)-binding residues include His97, His99, Glu103, and His141.

This sequence belongs to the acireductone dioxygenase (ARD) family. As to quaternary structure, monomer. Fe(2+) is required as a cofactor. It depends on Ni(2+) as a cofactor.

The catalysed reaction is 1,2-dihydroxy-5-(methylsulfanyl)pent-1-en-3-one + O2 = 3-(methylsulfanyl)propanoate + CO + formate + 2 H(+). It carries out the reaction 1,2-dihydroxy-5-(methylsulfanyl)pent-1-en-3-one + O2 = 4-methylsulfanyl-2-oxobutanoate + formate + 2 H(+). It functions in the pathway amino-acid biosynthesis; L-methionine biosynthesis via salvage pathway; L-methionine from S-methyl-5-thio-alpha-D-ribose 1-phosphate: step 5/6. Its function is as follows. Catalyzes 2 different reactions between oxygen and the acireductone 1,2-dihydroxy-3-keto-5-methylthiopentene (DHK-MTPene) depending upon the metal bound in the active site. Fe-containing acireductone dioxygenase (Fe-ARD) produces formate and 2-keto-4-methylthiobutyrate (KMTB), the alpha-ketoacid precursor of methionine in the methionine recycle pathway. Ni-containing acireductone dioxygenase (Ni-ARD) produces methylthiopropionate, carbon monoxide and formate, and does not lie on the methionine recycle pathway. This Xylella fastidiosa (strain M12) protein is Acireductone dioxygenase.